A 470-amino-acid polypeptide reads, in one-letter code: Suppressor of SWI4 1 homolog (470 aa).

The Brix domain maps to P29–N292. Phosphoserine is present on residues S238 and S240. Disordered regions lie at residues S240–Q264 and A323–N470. The segment covering A342 to R355 has biased composition (basic residues). S362 carries the post-translational modification Phosphoserine. An N6-acetyllysine modification is found at K441. Residues Q447–A457 show a composition bias toward basic residues.

It localises to the nucleus. The protein localises to the nucleolus. Functionally, may have a role in cell growth. This is Suppressor of SWI4 1 homolog (Ppan) from Mus musculus (Mouse).